The following is a 120-amino-acid chain: uncharacterized protein (120 aa).

In terms of domain architecture, Nudix hydrolase spans 29–120 (QRQAAVLVPI…QVTPVVGIIP (92 aa)). A Nudix box motif is present at residues 67-89 (GAVDNSDATLIAAALREAQEEVA). Residues E83 and E87 each coordinate Mg(2+).

The protein belongs to the Nudix hydrolase family. PCD1 subfamily. Mn(2+) is required as a cofactor. It depends on Mg(2+) as a cofactor.

Its function is as follows. Probably mediates the hydrolysis of some nucleoside diphosphate derivatives. This is an uncharacterized protein from Klebsiella aerogenes (Enterobacter aerogenes).